Reading from the N-terminus, the 277-residue chain is F420-dependent methylenetetrahydromethanopterin dehydrogenase (277 aa).

This sequence belongs to the MTD family.

The enzyme catalyses 5,10-methylenetetrahydromethanopterin + oxidized coenzyme F420-(gamma-L-Glu)(n) + 2 H(+) = 5,10-methenyl-5,6,7,8-tetrahydromethanopterin + reduced coenzyme F420-(gamma-L-Glu)(n). The protein operates within one-carbon metabolism; methanogenesis from CO(2); 5,10-methylene-5,6,7,8-tetrahydromethanopterin from 5,10-methenyl-5,6,7,8-tetrahydromethanopterin (coenzyme F420 route): step 1/1. Catalyzes the reversible reduction of methenyl-H(4)MPT(+) to methylene-H(4)MPT. This chain is F420-dependent methylenetetrahydromethanopterin dehydrogenase, found in Methanococcus maripaludis (strain C7 / ATCC BAA-1331).